We begin with the raw amino-acid sequence, 277 residues long: MPDTLKVADVTFGGNHPVALIAGPCVMENEAHTLAIARQLLEVKNELGVGVVFKASFDKANRTSVSAYRGPGLESGLRILDKVRQQTGLPIVSDIHDVSQVEAAAEVLDILQIPAFLCRQTDLLLAAGRSGKVVNIKKGQFLAPWDMANAVAKVASTGNDRILLTERGTSFGYNNLVVDMRSLAVMRELGCPVVFDATHAVQLPGGAGTSSGGQRQFVAALSRAAVAVGVDGLFWEVHPDPDRALCDGANSLPLDQVKKTLKEMMAIDAIVKGNTES.

This sequence belongs to the KdsA family.

The protein localises to the cytoplasm. The catalysed reaction is D-arabinose 5-phosphate + phosphoenolpyruvate + H2O = 3-deoxy-alpha-D-manno-2-octulosonate-8-phosphate + phosphate. It participates in carbohydrate biosynthesis; 3-deoxy-D-manno-octulosonate biosynthesis; 3-deoxy-D-manno-octulosonate from D-ribulose 5-phosphate: step 2/3. It functions in the pathway bacterial outer membrane biogenesis; lipopolysaccharide biosynthesis. In Syntrophotalea carbinolica (strain DSM 2380 / NBRC 103641 / GraBd1) (Pelobacter carbinolicus), this protein is 2-dehydro-3-deoxyphosphooctonate aldolase.